The chain runs to 3010 residues: Genome polyprotein (3010 aa).

Ser2 carries the N-acetylserine; by host modification. The interval 2 to 23 (STNPKPQRKTKRNTYRRPQDVK) is interaction with STAT1. Residues 2 to 58 (STNPKPQRKTKRNTYRRPQDVKFPGGGQIVGGVYVLPRRGPTLGVRATRKTSERSQP) form an interaction with EIF2AK2/PKR region. The tract at residues 2–59 (STNPKPQRKTKRNTYRRPQDVKFPGGGQIVGGVYVLPRRGPTLGVRATRKTSERSQPR) is interaction with DDX3X. The segment at 2 to 75 (STNPKPQRKT…PKARRPEGRA (74 aa)) is disordered. At 2 to 168 (STNPKPQRKT…EDGVNYATGN (167 aa)) the chain is on the cytoplasmic side. 2 consecutive short sequence motifs (nuclear localization signal) follow at residues 5 to 13 (PKPQRKTKR) and 38 to 43 (PRRGPT). The span at 7–16 (PQRKTKRNTY) shows a compositional bias: basic residues. Position 53 is a phosphoserine; by host (Ser53). Short sequence motifs (nuclear localization signal) lie at residues 58–64 (PRGRRQP) and 66–71 (PKARRP). Basic residues predominate over residues 58-68 (PRGRRQPIPKA). Position 99 is a phosphoserine; by host (Ser99). Residues 112-152 (PRRRSRNLGKVIDTLTCGFADLMGYIPLVGAPLGGAARALA) form an important for endoplasmic reticulum and mitochondrial localization region. Position 116 is a phosphoserine; by host PKA (Ser116). Residues 122–173 (VIDTLTCGFADLMGYIPLVGAPLGGAARALAHGVRVLEDGVNYATGNLPGCS) are interaction with APOA2. Residues 164–167 (YATG) form an important for lipid droplets localization region. The helical transmembrane segment at 169-189 (LPGCSFSIFLLALLSCLTIPA) threads the bilayer. Positions 178 to 191 (LLALLSCLTIPASA) are cleaved as a propeptide — ER anchor for the core protein, removed in mature form by host signal peptidase. Topologically, residues 190–358 (SAYQVRNASG…AGAHWGVLAG (169 aa)) are lumenal. N-linked (GlcNAc...) asparagine; by host glycans are attached at residues Asn196, Asn209, Asn234, and Asn250. Residues 265–296 (LVGAAAFCSAMYVGDLCGSVFLVSQLFTFSPR) form an important for fusion region. N-linked (GlcNAc...) asparagine; by host glycosylation occurs at Asn305. The helical transmembrane segment at 359 to 379 (LAYYSMVGNWAKVLIVMLLFA) threads the bilayer. Residues 380 to 725 (GVDGVTYTTG…WEYIVLLFLL (346 aa)) lie on the Lumenal side of the membrane. Residues 385 to 411 (TYTTGGSQARHTQSVTSFFTQGPAQRI) are HVR1. Asn417, Asn423, Asn430, and Asn448 each carry an N-linked (GlcNAc...) (high mannose) asparagine; by host glycan. Intrachain disulfides connect Cys429–Cys552, Cys452–Cys459, Cys486–Cys494, and Cys503–Cys508. Residues 474–479 (YTEPRD) are HVR2. Residues 480 to 493 (LDQRPYCWHYAPRQ) form a CD81-binding 1 region. The N-linked (GlcNAc...) (high mannose) asparagine; by host glycan is linked to Asn532. N-linked (GlcNAc...) asparagine; by host glycosylation is present at Asn540. The CD81-binding 2 stretch occupies residues 544 to 551 (PPQGNWFG). Asn556 carries an N-linked (GlcNAc...) (high mannose) asparagine; by host glycan. Cys564 and Cys569 are oxidised to a cystine. The N-linked (GlcNAc...) (high mannose) asparagine; by host glycan is linked to Asn576. 3 cysteine pairs are disulfide-bonded: Cys581–Cys585, Cys597–Cys620, and Cys607–Cys644. 2 N-linked (GlcNAc...) (high mannose) asparagine; by host glycosylation sites follow: Asn623 and Asn645. An intrachain disulfide couples Cys652 to Cys677. The PKR/eIF2-alpha phosphorylation homology domain (PePHD) stretch occupies residues 660-671 (SELSPLLLSTTE). A helical membrane pass occupies residues 726 to 746 (LADARVCACLWMMLLIAQAEA). At 747-757 (ALENLVVLNAA) the chain is on the lumenal side. The chain crosses the membrane as a helical span at residues 758-778 (SLAGADGILSFLVFFCAAWYI). Residues 779–781 (KGR) lie on the Cytoplasmic side of the membrane. The chain crosses the membrane as a helical span at residues 782–803 (LVPGAAYALYGVWPLLLLLLAL). Residues 804-813 (PPRAYAMDRE) lie on the Lumenal side of the membrane. The chain crosses the membrane as a helical span at residues 814–834 (MAASCGGVVFVGLILLTLSPH). At 835-838 (YKVF) the chain is on the cytoplasmic side. The helical transmembrane segment at 839 to 859 (LARLIWWLQYFITRAEAHLCV) threads the bilayer. Residues 860–881 (WVPPLNVRGGRDAIILLTCAAH) lie on the Lumenal side of the membrane. The helical transmembrane segment at 882 to 902 (PELIFDITKLLLAILGPLMVL) threads the bilayer. In terms of domain architecture, Peptidase C18 spans 903 to 1026 (QAAITAMPYF…SIEGQGWRLL (124 aa)). Topologically, residues 903–1657 (QAAITAMPYF…CMSADLEVVT (755 aa)) are cytoplasmic. The segment at 904–1206 (AAITAMPYFV…PVESMETTMR (303 aa)) is protease NS2-3. The S-palmitoyl cysteine; by host moiety is linked to residue Cys922. The interval 929-949 (AGGHYVQMAFMKLAALTGTYV) is interaction with host SCPS1. Residues His952, Glu972, and Cys993 each act as for protease NS2 activity; shared with dimeric partner in the active site. In terms of domain architecture, Peptidase S29 spans 1027–1208 (APITAYAQQT…ESMETTMRSP (182 aa)). Active-site charge relay system; for serine protease NS3 activity residues include His1083 and Asp1107. Zn(2+) contacts are provided by Cys1123 and Cys1125. Residue Ser1165 is the Charge relay system; for serine protease NS3 activity of the active site. Zn(2+)-binding residues include Cys1171 and His1175. A Helicase ATP-binding domain is found at 1217–1369 (PAVPQTFQVA…PNIEEVALSN (153 aa)). Position 1230–1237 (1230–1237 (APTGSGKS)) interacts with ATP. Positions 1237 and 1317 each coordinate Mg(2+). Residues 1316–1319 (DECH) carry the DECH box motif. The tract at residues 1486–1497 (QRRGRTGRGRGG) is RNA-binding. A helical membrane pass occupies residues 1658–1678 (STWVLVGGVLAALAAYCLTTG). An NS3-binding region spans residues 1679–1690 (SVVIVGRIILSG). The Cytoplasmic segment spans residues 1679–1805 (SVVIVGRIIL…SITSPLTTQN (127 aa)). A helical membrane pass occupies residues 1806-1824 (TLLFNILGGWVAAQLAPPS). Residues 1825–1828 (AASA) are Lumenal-facing. A helical transmembrane segment spans residues 1829-1849 (FVGAGIAGAAIGSIGLGKVLV). Residue Asp1850 is a topological domain, cytoplasmic. Residues 1851–1871 (ILAGYGAGVAGALVAFKVMSG) form a helical membrane-spanning segment. Residues 1872–1881 (EAPSAEDLVN) lie on the Lumenal side of the membrane. A helical membrane pass occupies residues 1882 to 1902 (LLPAILSPGALVVGVVCAAIL). At 1903–1972 (RRHVGPGEGA…WINEDCSTPC (70 aa)) the chain is on the cytoplasmic side. S-palmitoyl cysteine; by host attachment occurs at residues Cys1968 and Cys1972. An intramembrane segment occupies 1973–2002 (SGSWLKDVWDWICTVLTDFKTWLQSKLLPK). The Cytoplasmic segment spans residues 2003–2989 (LPGVPFFSCQ…YHSLSRARPR (987 aa)). 4 residues coordinate Zn(2+): Cys2011, Cys2029, Cys2031, and Cys2052. The interval 2120-2208 (EFFTELDGVR…ASSSASQLSA (89 aa)) is FKBP8-binding. Positions 2120–2332 (EFFTELDGVR…PIPPPRKKRT (213 aa)) are transcriptional activation. Positions 2135-2139 (PACRP) are interaction with non-structural protein 4A. The interval 2187-2220 (KRRLARGSPPSLASSSASQLSAPSLKATCTTHHD) is disordered. The segment at 2189-2441 (RLARGSPPSL…PCAAEESKLP (253 aa)) is interaction with host SKP2. Ser2194 is subject to Phosphoserine; by host; in p56. The segment covering 2194-2211 (SPPSLASSSASQLSAPSL) has biased composition (low complexity). Ser2197, Ser2201, Ser2204, Ser2207, and Ser2210 each carry phosphoserine; by host; in p58. Residues 2210-2249 (SLKATCTTHHDSPDADLIEANLLWRQEMGGNITRVESENK) are ISDR. An interaction with EIF2AK2/PKR region spans residues 2210–2275 (SLKATCTTHH…REVSVAAEIL (66 aa)). An NS4B-binding region spans residues 2249-2306 (KVVILDSFDPLRAEEDEREVSVAAEILRKSKKFPPALPIWARPDYNPPLLESWKSPDY). The SH3-binding signature appears at 2322 to 2325 (PPIP). A Nuclear localization signal motif is present at residues 2326 to 2334 (PPRKKRTVV). Lys2350 is covalently cross-linked (Glycyl lysine isopeptide (Lys-Gly) (interchain with G-Cter in ubiquitin)). Residues 2351–2371 (TFGSSGSSAVDSGTATAPPDQ) are compositionally biased toward polar residues. Residues 2351–2408 (TFGSSGSSAVDSGTATAPPDQTSDDGDKESDVESYSSMPPLEGEPGDPDLSDGSWSTV) are disordered. Positions 2354–2377 (SSGSSAVDSGTATAPPDQTSDDGD) are V3. Acidic residues predominate over residues 2372–2382 (TSDDGDKESDV). Phosphoserine; by host is present on residues Ser2448 and Ser2461. The region spanning 2633–2751 (PMGFSYDTRC…ICESAGTQED (119 aa)) is the RdRp catalytic domain. Mg(2+) is bound by residues Asp2639, Asp2737, and Asp2738. Residues 2990–3010 (WFMWCLLLLSVGVGIYLLPNR) form a helical membrane-spanning segment.

The protein belongs to the hepacivirus polyprotein family. In terms of assembly, homooligomer. Interacts with E1 (via C-terminus). Interacts with the non-structural protein 5A. Interacts (via N-terminus) with host STAT1 (via SH2 domain); this interaction results in decreased STAT1 phosphorylation and ubiquitin-mediated proteasome-dependent STAT1 degradation, leading to decreased IFN-stimulated gene transcription. Interacts with host STAT3; this interaction constitutively activates STAT3. Interacts with host LTBR receptor. Interacts with host TNFRSF1A receptor and possibly induces apoptosis. Interacts with host HNRPK. Interacts with host YWHAE. Interacts with host UBE3A/E6AP. Interacts with host DDX3X. Interacts with host APOA2. Interacts with host RXRA protein. Interacts with host SP110 isoform 3/Sp110b; this interaction sequesters the transcriptional corepressor SP110 away from the nucleus. Interacts with host CREB3 nuclear transcription protein; this interaction triggers cell transformation. Interacts with host ACY3. Interacts with host C1QR1. Interacts with host RBM24; this interaction, which enhances the interaction of the mature core protein with 5'-UTR, may inhibit viral translation and favor replication. Interacts with host EIF2AK2/PKR; this interaction induces the autophosphorylation of EIF2AK2. Part of the viral assembly initiation complex composed of NS2, E1, E2, NS3, NS4A, NS5A and the mature core protein. As to quaternary structure, forms a heterodimer with envelope glycoprotein E2. Interacts with mature core protein. Interacts with protease NS2. The heterodimer E1/E2 interacts with host CLDN1; this interaction plays a role in viral entry into host cell. Interacts with host SPSB2 (via C-terminus). Part of the viral assembly initiation complex composed of NS2, E1, E2, NS3, NS4A, NS5A and the mature core protein. Interacts with host NEURL3; this interaction prevents E1 binding to glycoprotein E2. Forms a heterodimer with envelope glycoprotein E1. Interacts with host CD81 and SCARB1 receptors; these interactions play a role in viral entry into host cell. Interacts with host EIF2AK2/PKR; this interaction inhibits EIF2AK2 and probably allows the virus to evade the innate immune response. Interacts with host CD209/DC-SIGN and CLEC4M/DC-SIGNR. Interact with host SPCS1; this interaction is essential for viral particle assembly. Interacts with protease NS2. The heterodimer E1/E2 interacts with host CLDN1; this interaction plays a role in viral entry into host cell. Part of the viral assembly initiation complex composed of NS2, E1, E2, NS3, NS4A, NS5A and the mature core protein. Interacts with host SLC3A2/4F2hc; the interaction may facilitate viral entry into host cell. Interacts with human PLSCR1. In terms of assembly, homohexamer. Homoheptamer. Interacts with protease NS2. As to quaternary structure, homodimer. Interacts with host SPCS1; this interaction is essential for viral particle assembly. Interacts with envelope glycoprotein E1. Interacts with envelope glycoprotein E2. Interacts with viroporin p7. Interacts with serine protease/helicase NS3. Part of the replication complex composed of NS2, NS3, NS4A, NS4B, NS5A and the RNA-directed RNA polymerase embedded in an ER-derived membranous web. Part of the viral assembly initiation complex composed of NS2, E1, E2, NS3, NS4A, NS5A and the mature core protein. Interacts with protease NS2. Interacts with non-structural protein 4A; this interaction stabilizes the folding of NS3 serine protease. NS3-NS4A interaction is essential for NS3 activation and allows membrane anchorage of the latter. NS3/NS4A complex also prevents phosphorylation of host IRF3, thus preventing the establishment of dsRNA induced antiviral state. Interacts with host MAVS; this interaction leads to the cleavage and inhibition of host MAVS. Interacts with host TICAM1; this interaction leads to the cleavage and inhibition of host TICAM1. Interacts with host TANK-binding kinase/TBK1; this interaction results in the inhibition of the association between TBK1 and IRF3, which leads to the inhibition of IRF3 activation. Interacts with host RBM24. Part of the replication complex composed of NS2, NS3, NS4A, NS4B, NS5A and the RNA-directed RNA polymerase embedded in an ER-derived membranous web. Part of the viral assembly initiation complex composed of NS2, E1, E2, NS3, NS4A, NS5A and the mature core protein. In terms of assembly, interacts with NS3 serine protease; this interaction stabilizes the folding of NS3 serine protease. NS3-NS4A interaction is essential for NS3 activation and allows membrane anchorage of the latter. Interacts with non-structural protein 5A (via N-terminus). Part of the replication complex composed of NS2, NS3, NS4A, NS4B, NS5A and the RNA-directed RNA polymerase embedded in an ER-derived membranous web. Part of the viral assembly initiation complex composed of NS2, E1, E2, NS3, NS4A, NS5A and the mature core protein. As to quaternary structure, homomultimer. Interacts with non-structural protein NS5A. Interacts with host PLA2G4C; this interaction likely initiates the recruitment of replication complexes to lipid droplets. Interacts with host STING; this interaction disrupts the interaction between STING and TBK1 thereby suppressing the interferon signaling. Part of the replication complex composed of NS2, NS3, NS4A, NS4B, NS5A and the RNA-directed RNA polymerase embedded in an ER-derived membranous web. Monomer. Homodimer; dimerization is required for RNA-binding. Interacts with the mature core protein. Interacts (via N-terminus) with non-structural protein 4A. Interacts with non-structural protein 4B. Interacts (via region D2) with RNA-directed RNA polymerase. Part of the viral assembly initiation complex composed of NS2, E1, E2, NS3, NS4A, NS5A and the mature core protein. Part of the replication complex composed of NS2, NS3, NS4A, NS4B, NS5A and the RNA-directed RNA polymerase embedded in an ER-derived membranous web. Interacts with host GRB2. Interacts with host BIN1. Interacts with host PIK3R1. Interacts with host SRCAP. Interacts with host FKBP8. Interacts (via C-terminus) with host VAPB (via MSP domain). Interacts with host EIF2AK2/PKR; this interaction leads to disruption of EIF2AK2 dimerization by NS5A and probably allows the virus to evade the innate immune response. Interacts (via N-terminus) with host PACSIN2 (via N-terminus); this interaction attenuates protein kinase C alpha-mediated phosphorylation of PACSIN2 by disrupting the interaction between PACSIN2 and PRKCA. Interacts (via N-terminus) with host SRC kinase (via SH2 domain). Interacts with most Src-family kinases. Interacts with host IFI27 and SKP2; promotes the ubiquitin-mediated proteasomal degradation of NS5A. Interacts with host GPS2. Interacts with host TNFRSF21; this interaction allows the modulation by the virus of JNK, p38 MAPK, STAT3, and Akt signaling pathways in a DR6-dependent manner. Interacts (via N-terminus) with host CIDEB (via N-terminus); this interaction seems to regulate the association of HCV particles with APOE. Interacts with host CHKA/Choline Kinase-alpha; CHKA bridges host PI4KA and NS5A and potentiates NS5A-stimulated PI4KA activity, which then facilitates the targeting of the ternary complex to the ER for viral replication. Interacts with host SPSB2 (via C-terminus); this interaction targets NS5A for ubiquitination and degradation. Interacts with host RAB18; this interaction may promote the association of NS5A and other replicase components with lipid droplets. Interacts (via region D2) with host PPIA/CYPA; the interaction stimulates RNA-binding ability of NS5A and is dependent on the peptidyl-prolyl cis-trans isomerase activity of PPIA/CYPA. Interacts with host TRIM14; this interaction induces the degradation of NS5A. In terms of assembly, homooligomer. Interacts with non-structural protein 5A. Interacts with host VAPB. Interacts with host PRK2/PKN2. Interacts with host HNRNPA1 and SEPT6; these interactions facilitate viral replication. Part of the replication complex composed of NS2, NS3, NS4A, NS4B, NS5A and the RNA-directed RNA polymerase. Zn(2+) is required as a cofactor. Mg(2+) serves as cofactor. In terms of processing, specific enzymatic cleavages in vivo yield mature proteins. The structural proteins, core, E1, E2 and p7 are produced by proteolytic processing by host signal peptidases. The core protein precursor is synthesized as a 23 kDa, which is retained in the ER membrane through the hydrophobic signal peptide. Cleavage by the signal peptidase releases the 21 kDa mature core protein. The cleavage of the core protein precursor occurs between aminoacids 176 and 188 but the exact cleavage site is not known. Some degraded forms of the core protein appear as well during the course of infection. The other proteins (p7, NS2, NS3, NS4A, NS4B, NS5A and NS5B) are cleaved by the viral proteases. Autoprocessing between NS2 and NS3 is mediated by the NS2 cysteine protease catalytic domain and regulated by the NS3 N-terminal domain. Post-translationally, phosphorylated by host PKC and PKA. Ubiquitinated; mediated by UBE3A and leading to core protein subsequent proteasomal degradation. In terms of processing, highly N-glycosylated. Post-translationally, palmitoylation is required for NS2/3 autoprocessing and E2 recruitment to membranes. Palmitoylated. This modification may play a role in its polymerization or in protein-protein interactions. In terms of processing, phosphorylated on serines in a basal form termed p56. p58 is a hyperphosphorylated form of p56. p56 and p58 coexist in the cell in roughly equivalent amounts. Hyperphosphorylation is dependent on the presence of NS4A. Host CSNK1A1/CKI-alpha or RPS6KB1 kinases may be responsible for NS5A phosphorylation. Post-translationally, tyrosine phosphorylation is essential for the interaction with host SRC. Ubiquitinated. Ubiquitination, most probably at Lys-2350, mediated by host IFI27 and SKP2 leads to proteasomal degradation, restricting viral infection. Ubiquitination by host TRIM22 leads to interruption of viral replication. In terms of processing, the N-terminus is phosphorylated by host PRK2/PKN2.

It localises to the host endoplasmic reticulum membrane. The protein localises to the host mitochondrion membrane. It is found in the virion. The protein resides in the host cytoplasm. Its subcellular location is the host nucleus. It localises to the host lipid droplet. The protein localises to the virion membrane. It is found in the host mitochondrion. The protein resides in the host cell membrane. Its subcellular location is the host perinuclear region. It catalyses the reaction Hydrolysis of four peptide bonds in the viral precursor polyprotein, commonly with Asp or Glu in the P6 position, Cys or Thr in P1 and Ser or Ala in P1'.. The catalysed reaction is a ribonucleoside 5'-triphosphate + H2O = a ribonucleoside 5'-diphosphate + phosphate + H(+). It carries out the reaction ATP + H2O = ADP + phosphate + H(+). The enzyme catalyses RNA(n) + a ribonucleoside 5'-triphosphate = RNA(n+1) + diphosphate. With respect to regulation, inhibited by the antiviral drug hexamethylene amiloride. Inhibition by amantadine appears to be genotype-dependent. Also inhibited by long-alkyl-chain iminosugar derivatives. Activity is up-regulated by PRK2/PKN2-mediated phosphorylation. Packages viral RNA to form a viral nucleocapsid, and promotes virion budding. Participates in the viral particle production as a result of its interaction with the non-structural protein 5A. Binds RNA and may function as a RNA chaperone to induce the RNA structural rearrangements taking place during virus replication. Modulates viral translation initiation by interacting with viral IRES and 40S ribosomal subunit. Affects various cell signaling pathways, host immunity and lipid metabolism. Prevents the establishment of cellular antiviral state by blocking the interferon-alpha/beta (IFN-alpha/beta) and IFN-gamma signaling pathways and by blocking the formation of phosphorylated STAT1 and promoting ubiquitin-mediated proteasome-dependent degradation of STAT1. Activates STAT3 leading to cellular transformation. Regulates the activity of cellular genes, including c-myc and c-fos. May repress the promoter of p53, and sequester CREB3 and SP110 isoform 3/Sp110b in the cytoplasm. Represses cell cycle negative regulating factor CDKN1A, thereby interrupting an important check point of normal cell cycle regulation. Targets transcription factors involved in the regulation of inflammatory responses and in the immune response: suppresses TNF-induced NF-kappa-B activation, and activates AP-1. Binds to dendritic cells (DCs) via C1QR1, resulting in down-regulation of T-lymphocytes proliferation. Alters lipid metabolism by interacting with hepatocellular proteins involved in lipid accumulation and storage. Induces up-regulation of FAS promoter activity, and thereby contributes to the increased triglyceride accumulation in hepatocytes (steatosis). In terms of biological role, forms a heterodimer with envelope glycoprotein E2, which mediates virus attachment to the host cell, virion internalization through clathrin-dependent endocytosis and fusion with host membrane. Fusion with the host cell is most likely mediated by both E1 and E2, through conformational rearrangements of the heterodimer required for fusion rather than a classical class II fusion mechanism. E1/E2 heterodimer binds host apolipoproteins such as APOB and ApoE thereby forming a lipo-viro-particle (LVP). APOE associated to the LVP allows the initial virus attachment to cell surface receptors such as the heparan sulfate proteoglycans (HSPGs), syndecan-1 (SDC1), syndecan-1 (SDC2), the low-density lipoprotein receptor (LDLR) and scavenger receptor class B type I (SCARB1). The cholesterol transfer activity of SCARB1 allows E2 exposure and binding of E2 to SCARB1 and the tetraspanin CD81. E1/E2 heterodimer binding on CD81 activates the epithelial growth factor receptor (EGFR) signaling pathway. Diffusion of the complex E1-E2-EGFR-SCARB1-CD81 to the cell lateral membrane allows further interaction with Claudin 1 (CLDN1) and occludin (OCLN) to finally trigger HCV entry. Functionally, forms a heterodimer with envelope glycoprotein E1, which mediates virus attachment to the host cell, virion internalization through clathrin-dependent endocytosis and fusion with host membrane. Fusion with the host cell is most likely mediated by both E1 and E2, through conformational rearrangements of the heterodimer required for fusion rather than a classical class II fusion mechanism. The interaction between envelope glycoprotein E2 and host apolipoprotein E/APOE allows the proper assembly, maturation and infectivity of the viral particles. This interaction is probably promoted via the up-regulation of cellular autophagy by the virus. E1/E2 heterodimer binds host apolipoproteins such as APOB and APOE thereby forming a lipo-viro-particle (LVP). APOE associated to the LVP allows the initial virus attachment to cell surface receptors such as the heparan sulfate proteoglycans (HSPGs), syndecan-1 (SDC1), syndecan-1 (SDC2), the low-density lipoprotein receptor (LDLR) and scavenger receptor class B type I (SCARB1). The cholesterol transfer activity of SCARB1 allows E2 exposure and binding of E2 to SCARB1 and the tetraspanin CD81. E1/E2 heterodimer binding on CD81 activates the epithelial growth factor receptor (EGFR) signaling pathway. Diffusion of the complex E1-E2-EGFR-SCARB1-CD81 to the cell lateral membrane allows further interaction with Claudin 1 (CLDN1) and occludin (OCLN) to finally trigger HCV entry. Inhibits host EIF2AK2/PKR activation, preventing the establishment of an antiviral state. Viral ligand for CD209/DC-SIGN and CLEC4M/DC-SIGNR, which are respectively found on dendritic cells (DCs), and on liver sinusoidal endothelial cells and macrophage-like cells of lymph node sinuses. These interactions allow the capture of circulating HCV particles by these cells and subsequent facilitated transmission to permissive cells such as hepatocytes and lymphocyte subpopulations. The interaction between E2 and host amino acid transporter complex formed by SLC3A2 and SLC7A5/LAT1 may facilitate viral entry into host cell. Its function is as follows. Ion channel protein that acts as a viroporin and plays an essential role in the assembly, envelopment and secretion of viral particles. Regulates the host cell secretory pathway, which induces the intracellular retention of viral glycoproteins and favors assembly of viral particles. Creates a pore in acidic organelles and releases Ca(2+) and H(+) in the cytoplasm of infected cells, leading to a productive viral infection. High levels of cytoplasmic Ca(2+) may trigger membrane trafficking and transport of viral ER-associated proteins to viroplasms, sites of viral genome replication. This ionic imbalance induces the assembly of the inflammasome complex, which triggers the maturation of pro-IL-1beta into IL-1beta through the action of caspase-1. Targets also host mitochondria and induces mitochondrial depolarization. In addition of its role as a viroporin, acts as a lipid raft adhesion factor. Cysteine protease required for the proteolytic auto-cleavage between the non-structural proteins NS2 and NS3. The N-terminus of NS3 is required for the function of NS2 protease (active region NS2-3). Promotes the initiation of viral particle assembly by mediating the interaction between structural and non-structural proteins. In terms of biological role, displays three enzymatic activities: serine protease with a chymotrypsin-like fold, NTPase and RNA helicase. NS3 serine protease, in association with NS4A, is responsible for the cleavages of NS3-NS4A, NS4A-NS4B, NS4B-NS5A and NS5A-NS5B. The NS3/NS4A complex prevents phosphorylation of host IRF3, thus preventing the establishment of dsRNA induced antiviral state. The NS3/NS4A complex induces host amino acid transporter component SLC3A2, thus contributing to HCV propagation. NS3 RNA helicase binds to RNA and unwinds both dsDNA and dsRNA in the 3' to 5' direction, and likely resolves RNA complicated stable secondary structures in the template strand. Binds a single ATP and catalyzes the unzipping of a single base pair of dsRNA. Inhibits host antiviral proteins TBK1 and IRF3 thereby preventing the establishment of an antiviral state. Cleaves host MAVS/CARDIF thereby preventing the establishment of an antiviral state. Cleaves host TICAM1/TRIF, thereby disrupting TLR3 signaling and preventing the establishment of an antiviral state. Functionally, induces a specific membrane alteration that serves as a scaffold for the virus replication complex. This membrane alteration gives rise to the so-called ER-derived membranous web that contains the replication complex. NS4B self-interaction contributes to its function in membranous web formation. Promotes host TRIF protein degradation in a CASP8-dependent manner thereby inhibiting host TLR3-mediated interferon signaling. Disrupts the interaction between STING and TBK1 contributing to the inhibition of interferon signaling. Its function is as follows. Phosphorylated protein that is indispensable for viral replication and assembly. Both hypo- and hyperphosphorylated states are required for the viral life cycle. The hyperphosphorylated form of NS5A is an inhibitor of viral replication. Involved in RNA-binding and especially in binding to the viral genome. Zinc is essential for RNA-binding. Participates in the viral particle production as a result of its interaction with the mature viral core protein. Its interaction with host VAPB may target the viral replication complex to vesicles. Down-regulates viral IRES translation initiation. Mediates interferon resistance, presumably by interacting with and inhibiting host EIF2AK2/PKR. Prevents BIN1-induced apoptosis. Acts as a transcriptional activator of some host genes important for viral replication when localized in the nucleus. Via the interaction with host PACSIN2, modulates lipid droplet formation in order to promote virion assembly. Modulates TNFRSF21/DR6 signaling pathway for viral propagation. RNA-dependent RNA polymerase that performs primer-template recognition and RNA synthesis during viral replication. Initiates RNA transcription/replication at a flavin adenine dinucleotide (FAD), resulting in a 5'- FAD cap on viral RNAs. In this way, recognition of viral 5' RNA by host pattern recognition receptors can be bypassed, thereby evading activation of antiviral pathways. In terms of biological role, peptide cofactor which forms a non-covalent complex with the N-terminal of NS3 serine protease. The NS3/NS4A complex prevents phosphorylation of host IRF3, thus preventing the establishment of dsRNA induced antiviral state. The NS3/NS4A complex induces host amino acid transporter component SLC3A2, thus contributing to HCV propagation. This chain is Genome polyprotein, found in Homo sapiens (Human).